The sequence spans 24 residues: Glutathione S-transferase (24 aa).

The protein belongs to the GST superfamily. In terms of assembly, monomer and homodimer.

The protein resides in the cytoplasm. The catalysed reaction is RX + glutathione = an S-substituted glutathione + a halide anion + H(+). Functionally, conjugation of reduced glutathione to a wide number of exogenous and endogenous hydrophobic electrophiles. This Pseudomonas sp. (strain CF600) protein is Glutathione S-transferase.